Consider the following 142-residue polypeptide: Hemoglobin subunit alpha (142 aa).

Serine 1 is subject to N-acetylserine. The region spanning 1 to 142 (SLTAKSKSIV…VASALSEKYR (142 aa)) is the Globin domain. Histidine 59 lines the O2 pocket. Histidine 88 lines the heme b pocket.

It belongs to the globin family. As to quaternary structure, heterotetramer of two alpha chains and two beta chains. As to expression, red blood cells.

In terms of biological role, involved in oxygen transport from gills to the various peripheral tissues. This is Hemoglobin subunit alpha (hba) from Electrophorus electricus (Electric eel).